A 311-amino-acid chain; its full sequence is Ribonuclease HIII (311 aa).

One can recognise an RNase H type-2 domain in the interval 95-311 (MSIVGSDEVG…NTEKAFRLLK (217 aa)). A divalent metal cation contacts are provided by aspartate 101, glutamate 102, and aspartate 206.

Belongs to the RNase HII family. RnhC subfamily. The cofactor is Mn(2+). Mg(2+) is required as a cofactor.

Its subcellular location is the cytoplasm. It catalyses the reaction Endonucleolytic cleavage to 5'-phosphomonoester.. Its function is as follows. Endonuclease that specifically degrades the RNA of RNA-DNA hybrids. This Bacillus cereus (strain ZK / E33L) protein is Ribonuclease HIII.